We begin with the raw amino-acid sequence, 416 residues long: Putative serine protease HhoB (416 aa).

The first 25 residues, 1–25 (MAIHLKASHLGVAVLLLLFGGAIGA), serve as a signal peptide directing secretion. Over residues 35-53 (GQNHSSPDSPVNTSPQSLT) the composition is skewed to polar residues. The interval 35–57 (GQNHSSPDSPVNTSPQSLTPAPV) is disordered. One can recognise a PDZ domain in the interval 320 to 398 (EMTKQLRTSG…PLAIAVKRGQ (79 aa)).

This sequence belongs to the peptidase S1C family.

Functionally, a putative protease, its function overlaps that of the related putative proteases HtrA and HhoA. This is Putative serine protease HhoB (hhoB) from Synechocystis sp. (strain ATCC 27184 / PCC 6803 / Kazusa).